The chain runs to 182 residues: Meiotically up-regulated gene 82 protein (182 aa).

Residues 161 to 182 (EKRLSEKKYKQKKKTQRRITMD) are disordered. Basic residues predominate over residues 169–182 (YKQKKKTQRRITMD).

This sequence belongs to the prokaryotic/mitochondrial release factor family.

The protein localises to the mitochondrion. In terms of biological role, has a role in meiosis. This chain is Meiotically up-regulated gene 82 protein (mug82), found in Schizosaccharomyces pombe (strain 972 / ATCC 24843) (Fission yeast).